The sequence spans 661 residues: Fusaric acid cluster transcription factor FUB12 (661 aa).

The zn(2)-C6 fungal-type DNA-binding region spans 17–48; the sequence is CVPCRTRKIKCNAAVVGLPCGSCVSRECPDEC. Disordered regions lie at residues 57–131 and 151–185; these read TVKG…RPPG and SAAQ…QLDD. Residues 73-98 are compositionally biased toward polar residues; the sequence is PDTNGSILSPRQQQLPTNVSRQTTDS. Basic and acidic residues predominate over residues 99 to 109; the sequence is SHSDPVEESIH. A compositionally biased stretch (polar residues) spans 110–119; that stretch reads ASHTGSSLRN. The span at 120 to 129 shows a compositional bias: basic and acidic residues; that stretch reads DTPHSRDRRP.

It localises to the nucleus. Transcription factor that is involved in the formation of the two Fusaric acid derivatives, dehydrofusaric acid and fusarinolic acid, serving as a detoxification mechanism. This Gibberella fujikuroi (strain CBS 195.34 / IMI 58289 / NRRL A-6831) (Bakanae and foot rot disease fungus) protein is Fusaric acid cluster transcription factor FUB12.